The following is a 299-amino-acid chain: tRNA dimethylallyltransferase (299 aa).

13–20 contributes to the ATP binding site; it reads GPTASGKT. Residue 15-20 participates in substrate binding; the sequence is TASGKT. Residues 38–41 form an interaction with substrate tRNA region; sequence DSRQ.

This sequence belongs to the IPP transferase family. Monomer. Mg(2+) serves as cofactor.

It carries out the reaction adenosine(37) in tRNA + dimethylallyl diphosphate = N(6)-dimethylallyladenosine(37) in tRNA + diphosphate. Catalyzes the transfer of a dimethylallyl group onto the adenine at position 37 in tRNAs that read codons beginning with uridine, leading to the formation of N6-(dimethylallyl)adenosine (i(6)A). This Synechococcus sp. (strain CC9605) protein is tRNA dimethylallyltransferase.